A 229-amino-acid chain; its full sequence is Peptidase E (229 aa).

Active-site charge relay system residues include serine 120, aspartate 135, and histidine 157.

It belongs to the peptidase S51 family.

The protein localises to the cytoplasm. It catalyses the reaction Dipeptidase E catalyzes the hydrolysis of dipeptides Asp-|-Xaa. It does not act on peptides with N-terminal Glu, Asn or Gln, nor does it cleave isoaspartyl peptides.. Functionally, hydrolyzes dipeptides containing N-terminal aspartate residues. May play a role in allowing the cell to use peptide aspartate to spare carbon otherwise required for the synthesis of the aspartate family of amino acids. This Escherichia coli O6:K15:H31 (strain 536 / UPEC) protein is Peptidase E.